The primary structure comprises 385 residues: Probable thioesterase PNKD (385 aa).

Positions 32 to 42 are enriched in polar residues; it reads KASQNRTRALQ. The interval 32–56 is disordered; that stretch reads KASQNRTRALQSHSSPECKEEPEPL. Val-121 is subject to Phosphoserine. Residues His-172, His-174, Asp-176, His-177, His-229, Asp-253, and His-291 each contribute to the Zn(2+) site.

This sequence belongs to the metallo-beta-lactamase superfamily. Glyoxalase II family. In terms of assembly, isoform 2 interacts with the sarcomeric proteins, MRLC2, MYOM1 and ENO3. Requires Zn(2+) as cofactor. Undergoes cleavage at the N-terminus. As to expression, expressed in many discrete areas of the brain.

The protein resides in the cell membrane. It is found in the mitochondrion. It localises to the cytoplasm. The enzyme catalyses a thioester + H2O = a thiol + a carboxylate + H(+). Its function is as follows. Probable thioesterase that may play a role in cellular detoxification processes; it likely acts on a yet-unknown alpha-hydroxythioester substrate. In vitro, it is able to catalyze the hydrolysis of S-D-lactoyl-glutathione to form glutathione and D-lactic acid at very low rate, though this reaction is not physiologically relevant in vivo. The polypeptide is Probable thioesterase PNKD (Pnkd) (Mus musculus (Mouse)).